The chain runs to 464 residues: MMEMRVGIVGGGLAGLTAAIALAEKGFDVSIIGPRSTDSNSYLAQAGIALPLLEGDSIRIHVLDTIKAGKYINDEEIVWNVISKSSEAHDFLTSHGVTFTGNELEGGHSYPRIFTIKSETGKHIIPILEKHARELDVNFIRGFVEEIGINNGKLAGVFLQGELLKFDAVVIAAGGFSGLYRFTAGVKNNIGLLIGDVALKGVPLRDMEFVQFHPTGFIGKRTYLITEAVRGAGAKLVTGDGERFVNELETRDIVARAIYMKMLEGKGVFLDARGIENFKDRFPYIYSVLRGEGINPEKDLIPITPVAHYTIGGISVDAFYRTRIKGLYAIGESACNGFHGANRLASNSLLECVVSGLEVARTISREKPKREVNDAPYSFNELGDVDSIREVLWNHAGIVRDEWSLREGLRKLKEIEVDERLKLVAKAVIISALKREESRGAHYRKDYPFMRKEFEHSSFFYPNV.

FAD-binding positions include 11-14 and 40-47; these read GGLA and NSYLAQAG. Arg251 acts as the Proton donor/acceptor in catalysis. FAD-binding positions include Glu332 and 348 to 349; that span reads SL.

It belongs to the FAD-dependent oxidoreductase 2 family. NadB subfamily. Requires FAD as cofactor.

The protein localises to the cytoplasm. The catalysed reaction is L-aspartate + O2 = iminosuccinate + H2O2. It participates in cofactor biosynthesis; NAD(+) biosynthesis; iminoaspartate from L-aspartate (oxidase route): step 1/1. Functionally, catalyzes the oxidation of L-aspartate to iminoaspartate, the first step in the de novo biosynthesis of NAD(+). This chain is L-aspartate oxidase (nadB), found in Pyrococcus horikoshii (strain ATCC 700860 / DSM 12428 / JCM 9974 / NBRC 100139 / OT-3).